The chain runs to 514 residues: Protein spinster homolog 3 (514 aa).

The interval 1-22 (MSTECLKPQTGGPQSQSLSQGG) is disordered. Over residues 9–21 (QTGGPQSQSLSQG) the composition is skewed to low complexity. Transmembrane regions (helical) follow at residues 54–74 (VLCY…GVLL), 88–108 (GLLQ…FGYL), 116–136 (AILS…SFIS), 149–169 (FVGT…GDLF), 176–196 (CALA…YVLG), 212–232 (LMPC…PDVP), 264–284 (FVFS…LGFW), 313–333 (LIFG…GAEA), 347–367 (LICA…LILA), 376–396 (VFLA…ADIL), 415–435 (VAHV…SSVL), and 453–473 (SFLC…LTAL). The interval 482-514 (ARQPGKGTLDSKDIASRNTESQGLLSGTSTPTE) is disordered. The span at 497–514 (SRNTESQGLLSGTSTPTE) shows a compositional bias: polar residues.

It belongs to the major facilitator superfamily. Spinster (TC 2.A.1.49) family.

The protein resides in the membrane. Functionally, sphingolipid transporter. This Mus musculus (Mouse) protein is Protein spinster homolog 3 (Spns3).